Reading from the N-terminus, the 99-residue chain is Plastocyanin (99 aa).

Residues 1–99 form the Plastocyanin-like domain; the sequence is VEVLMGGSGG…IGMSGIVTVN (99 aa). Cu cation contacts are provided by His37, Cys84, His87, and Met92.

Belongs to the plastocyanin family. Requires Cu(2+) as cofactor.

The protein localises to the plastid. The protein resides in the chloroplast thylakoid membrane. Its function is as follows. Participates in electron transfer between P700 and the cytochrome b6-f complex in photosystem I. This chain is Plastocyanin (PETE), found in Ginkgo biloba (Ginkgo).